The chain runs to 121 residues: Holin-like protein CidA 1 (121 aa).

4 consecutive transmembrane segments (helical) span residues 7–24, 28–50, 62–81, and 91–113; these read SGQILLLFCFAWTGEWIA, HLPVPGSIIGIFLLLISLKFNLV, LLKELILFFIPSAVAVIRYR, and LILIIMISTLCVTLVTGLLTELL.

It belongs to the CidA/LrgA family. CidA subfamily.

The protein localises to the cell membrane. In terms of biological role, increases the activity of extracellular murein hydrolases possibly by mediating their export via hole formation. Inhibited by the antiholin-like proteins LrgAB. In an unstressed cell, the LrgAB products probably inhibit the function of the CidA protein. When a cell is stressed by the addition of antibiotics or by other factors in the environment, CidA possibly oligomerizes within the bacterial cell membrane, creating lesions that disrupt the proton motive force, which in turn results in loss of cell viability. These lesions are also hypothesized to regulate the subsequent cell lysis by either allowing the murein hydrolases access to the cell wall substrate and/or regulating their activity by a possible change in the cell wall pH that results from loss of membrane potential. This Bacillus cereus (strain ATCC 14579 / DSM 31 / CCUG 7414 / JCM 2152 / NBRC 15305 / NCIMB 9373 / NCTC 2599 / NRRL B-3711) protein is Holin-like protein CidA 1 (cidA1).